The primary structure comprises 454 residues: UPF0210 protein Mlab_1030 (454 aa).

The protein belongs to the UPF0210 family.

This chain is UPF0210 protein Mlab_1030, found in Methanocorpusculum labreanum (strain ATCC 43576 / DSM 4855 / Z).